The chain runs to 238 residues: Transcription factor PCL1 (238 aa).

Over residues 71 to 90 (RLRRASSSSSSSFPAFASKG) the composition is skewed to low complexity. Positions 71–119 (RLRRASSSSSSSFPAFASKGAGTGADEAESGGGADGGNGNTNNSSSKRA) are disordered. Positions 100-109 (SGGGADGGNG) are enriched in gly residues. The myb-like GARP DNA-binding region spans 115-174 (SSKRARLVWTPQLHKRFVEVVAHLGMKNAVPKTIMQLMNVEGLTRENVASHLQKYRLYVK).

The protein resides in the nucleus. In terms of biological role, transcription factor that is essential for the generation of the circadian clock oscillation. Binds to specific sites on CCA1 promoter leading to CCA1 activation. In Oryza sativa subsp. japonica (Rice), this protein is Transcription factor PCL1 (PCL1).